A 448-amino-acid chain; its full sequence is Tapasin (448 aa).

The first 20 residues, 1-20 (MKSLSLLLAVALGLATAVSA), serve as a signal peptide directing secretion. Over 21 to 414 (GPAVIECWFV…LSGPSLEDSI (394 aa)) the chain is Lumenal. A disulfide bridge links C27 with C91. N-linked (GlcNAc...) asparagine glycosylation occurs at N253. In terms of domain architecture, Ig-like C1-type spans 292-399 (PKVSLMPATL…PASGRSAEVT (108 aa)). C315 and C382 are disulfide-bonded. The chain crosses the membrane as a helical span at residues 415-435 (GLFLSAFFLLGLFKALGWAAV). At 436–448 (YLSTCKDSKKKAE) the chain is on the cytoplasmic side.

In terms of assembly, heterodimer with PDIA3; disulfide-linked. Obligatory mediator for the interaction between newly assembled MHC class I molecules, calreticulin, PDIA3 and TAP. Up to 4 MHC class I/tapasin complexes bind to 1 TAP. Interacts with HLA-G-B2M complex; this interaction is required for loading of high affinity peptides. On its own or as part of MHC class I peptide loading complex, interacts with ligand-free MR1 or MR1-B2M complex, providing for stable MR1 pools ready for metabolite antigen processing.

The protein resides in the endoplasmic reticulum membrane. Involved in the association of MHC class I with transporter associated with antigen processing (TAP) and in the assembly of MHC class I with peptide (peptide loading). This Chlorocebus aethiops (Green monkey) protein is Tapasin (TAPBP).